We begin with the raw amino-acid sequence, 175 residues long: NADH dehydrogenase [ubiquinone] 1 alpha subcomplex assembly factor 4 (175 aa).

Residue Gly-2 is the site of N-myristoyl glycine attachment. Phosphoserine is present on Ser-35.

The protein belongs to the NDUFAF4 family. Binds calmodulin. Interacts with NDUFAF3. In terms of assembly, (Microbial infection) Interacts with the vesicular stomatitis virus matrix protein/M; the interaction inhibits viral propagation. Phosphorylated on serine. Prolactin stimulate serine phosphorylation.

It is found in the mitochondrion. Its subcellular location is the membrane. Involved in the assembly of mitochondrial NADH:ubiquinone oxidoreductase complex (complex I). May be involved in cell proliferation and survival of hormone-dependent tumor cells. May be a regulator of breast tumor cell invasion. The sequence is that of NADH dehydrogenase [ubiquinone] 1 alpha subcomplex assembly factor 4 from Homo sapiens (Human).